Consider the following 506-residue polypeptide: Galactose/methyl galactoside import ATP-binding protein MglA (506 aa).

ABC transporter domains are found at residues L14–S249 and N259–L506. G46–S53 is an ATP binding site.

The protein belongs to the ABC transporter superfamily. Galactose/methyl galactoside importer (TC 3.A.1.2.3) family. The complex is composed of one ATP-binding protein (MglA), two transmembrane proteins (MglC) and a solute-binding protein (MglB).

The protein resides in the cell inner membrane. It catalyses the reaction D-galactose(out) + ATP + H2O = D-galactose(in) + ADP + phosphate + H(+). The enzyme catalyses methyl beta-D-galactoside(out) + ATP + H2O = methyl beta-D-galactoside(in) + ADP + phosphate + H(+). Stimulated 3-fold by galactose and inhibited by vanadate, N-ethylmaleimide, and 5-methoxyindole-2-carboxylic acid. Part of the ABC transporter complex MglABC involved in galactose/methyl galactoside import. Responsible for energy coupling to the transport system. In Salmonella typhimurium (strain LT2 / SGSC1412 / ATCC 700720), this protein is Galactose/methyl galactoside import ATP-binding protein MglA.